Consider the following 257-residue polypeptide: RING1 and YY1-binding protein B (257 aa).

2 disordered regions span residues 1-24 and 45-257; these read MGDKKSPTRPKRQAKPTADNGFWD and RKGT…DESF. A RanBP2-type zinc finger spans residues 19 to 48; sequence DNGFWDCSVCTFRNSAEAFKCSICDVRKGT. Basic and acidic residues predominate over residues 74–129; the sequence is PKKEKKEKPERPEKDRAEEERPDINPPDEHPVEQRDKDKSEKEQPEKEKKDREKEI. Over residues 149–168 the composition is skewed to polar residues; it reads HQSPPSERNSIQSGKSTTKT. Over residues 169–178 the composition is skewed to basic residues; sequence KNSHNSRPKL. Positions 209-233 are enriched in low complexity; the sequence is TSSTSSSTVTSSASSEQQHQSSGSE.

Its subcellular location is the nucleus. The protein resides in the cytoplasm. In terms of biological role, may be implicated in the regulation of the transcription as a repressor of the transcriptional activity of E4TF1. The chain is RING1 and YY1-binding protein B (rybpb) from Danio rerio (Zebrafish).